The sequence spans 102 residues: Cytochrome c (102 aa).

Residue G1 is modified to N-acetylglycine. Over residues 1-11 the composition is skewed to basic and acidic residues; that stretch reads GDAERGKKLFE. The tract at residues 1-26 is disordered; it reads GDAERGKKLFESRAGQCHSSQKGVNS. The heme c site is built by C17, H18, and M79. The segment covering 17-26 has biased composition (polar residues); that stretch reads CHSSQKGVNS. N6,N6,N6-trimethyllysine is present on K85.

The protein belongs to the cytochrome c family. In terms of processing, binds 1 heme c group covalently per subunit.

It is found in the mitochondrion intermembrane space. Electron carrier protein. The oxidized form of the cytochrome c heme group can accept an electron from the heme group of the cytochrome c1 subunit of cytochrome reductase. Cytochrome c then transfers this electron to the cytochrome oxidase complex, the final protein carrier in the mitochondrial electron-transport chain. The sequence is that of Cytochrome c from Euglena viridis (Cercaria viridis).